The sequence spans 1005 residues: Probable beta-galactosidase A (1005 aa).

An N-terminal signal peptide occupies residues 1–18 (MKLLSVAAVALLAAQAAG). The substrate site is built by Y96, N140, A141, and E142. N156 carries an N-linked (GlcNAc...) asparagine glycan. N199 contacts substrate. E200 functions as the Proton donor in the catalytic mechanism. A disulfide bridge connects residues C205 and C206. Y260 contacts substrate. C266 and C315 form a disulfide bridge. E298 serves as the catalytic Nucleophile. A substrate-binding site is contributed by Y364. 10 N-linked (GlcNAc...) asparagine glycosylation sites follow: N373, N402, N453, N478, N522, N622, N760, N777, N805, and N914.

Belongs to the glycosyl hydrolase 35 family.

The protein localises to the secreted. It carries out the reaction Hydrolysis of terminal non-reducing beta-D-galactose residues in beta-D-galactosides.. In terms of biological role, cleaves beta-linked terminal galactosyl residues from gangliosides, glycoproteins, and glycosaminoglycans. This Aspergillus flavus (strain ATCC 200026 / FGSC A1120 / IAM 13836 / NRRL 3357 / JCM 12722 / SRRC 167) protein is Probable beta-galactosidase A (lacA).